The chain runs to 487 residues: MKAQPKASHFIGGAFVEDKAGKPPPVIYPATDEEIASLYSATPGIIEAAYAAALKAQGEWAALKPVERGRILRRTAEILREKNRKLSKLETLDTGKALQETLVADAASAADALEFFGGIISGFNGEFVELGGSFAYTRREALGICVGIGAWNYPIQIAAWKSAPALAMGNAFIFKPSENTPLSALALAEAYKEAGLPDGLFNVVQGYGDVGAALVNHRLTAKVSLTGSVPTGRRIMAQAGEQLKHVTMELGGKSPLIVFDDADLESAIGGAMLGNFYSTGQVCSNGTRVFVHKNIRERFIERLVERTRKIRIGDPFDEATQMGPLISAAQRDKVLSYIKKGKAEGATLACGGGVPKLQGFDKGFFIEPTVFADVTDTMTIAREEIFGPVMSVLEFSDEDEVIARANDSEFGLAAGVFTADLSRGHHVIGQIKAGTCWINAYNLTPVEVPFGGYKQSGIGRENGIAALAHYSQIKTVYVEMGKVDSPY.

Residues isoleucine 27 and aspartate 93 each coordinate K(+). Residue 149-151 (GAW) coordinates NAD(+). Residue lysine 161 is the Charge relay system of the active site. Residues 175–178 (KPSE) and 228–231 (SVPT) each bind NAD(+). A K(+)-binding site is contributed by leucine 243. Glutamate 249 functions as the Proton acceptor in the catalytic mechanism. Residues glycine 251, cysteine 283, and glutamate 384 each contribute to the NAD(+) site. Cysteine 283 (nucleophile) is an active-site residue. Cysteine 283 is subject to Cysteine sulfenic acid (-SOH). Residues lysine 454 and glycine 457 each coordinate K(+). Residue glutamate 461 is the Charge relay system of the active site.

This sequence belongs to the aldehyde dehydrogenase family. Dimer of dimers. K(+) serves as cofactor.

The catalysed reaction is betaine aldehyde + NAD(+) + H2O = glycine betaine + NADH + 2 H(+). The protein operates within amine and polyamine biosynthesis; betaine biosynthesis via choline pathway; betaine from betaine aldehyde: step 1/1. In terms of biological role, involved in the biosynthesis of the osmoprotectant glycine betaine. Catalyzes the irreversible oxidation of betaine aldehyde to the corresponding acid. This Brucella suis (strain ATCC 23445 / NCTC 10510) protein is Betaine aldehyde dehydrogenase.